Reading from the N-terminus, the 45-residue chain is Large ribosomal subunit protein bL36 (45 aa).

It belongs to the bacterial ribosomal protein bL36 family.

This chain is Large ribosomal subunit protein bL36, found in Psychrobacter sp. (strain PRwf-1).